An 875-amino-acid chain; its full sequence is Metal transporter CNNM2 (875 aa).

The Extracellular portion of the chain corresponds to 1–250 (MIGCGACEPE…TKMIVGEEKK (250 aa)). N-linked (GlcNAc...) asparagine glycosylation occurs at N112. The tract at residues 122-148 (EHERRRHTPGERGLGGPAPPEPDSGPQ) is disordered. A helical membrane pass occupies residues 251–271 (FLLPFWLQVIFISLLLCLSGM). The CNNM transmembrane domain maps to 251-431 (FLLPFWLQVI…DPYNDLVKEE (181 aa)). Over 272–313 (FSGLNLGLMALDPMELRIVQNCGTEKEKNYAKRIEPVRRQGN) the chain is Cytoplasmic. The segment at residues 314–334 (YLLCSLLLGNVLVNTTLTILL) is an intramembrane region (helical). At 335 to 338 (DDIA) the chain is on the cytoplasmic side. A helical transmembrane segment spans residues 339–359 (GSGLVAVVVSTIGIVIFGEIV). Residues 360 to 368 (PQAICSRHG) lie on the Extracellular side of the membrane. The chain crosses the membrane as a helical span at residues 369–389 (LAVGANTIFLTKFFMMMTFPA). The Cytoplasmic segment spans residues 390–875 (SYPVSKLLDC…NHSLHSEGAI (486 aa)). CBS domains are found at residues 450–511 (MTPL…CTPL) and 518–584 (YNHP…ILDE). Positions 741–763 (AGSPGENKSPPRPCGLNHSDSLS) are disordered. S761 carries the phosphoserine modification.

This sequence belongs to the ACDP family.

The protein resides in the cell membrane. Functionally, divalent metal cation transporter. Mediates transport of divalent metal cations in an order of Mg(2+) &gt; Co(2+) &gt; Mn(2+) &gt; Sr(2+) &gt; Ba(2+) &gt; Cu(2+) &gt; Fe(2+). This chain is Metal transporter CNNM2 (Cnnm2), found in Rattus norvegicus (Rat).